Reading from the N-terminus, the 315-residue chain is Protein sprouty homolog 2 (315 aa).

The span at 1-15 shows a compositional bias: polar residues; the sequence is MEARAQSGNGSQPLL. Disordered regions lie at residues 1-39 and 51-140; these read MEARAQSGNGSQPLLQTPRDGGRQRGEPDPRDALTQQVH and NTNE…GSSF. Residues 20 to 32 show a composition bias toward basic and acidic residues; the sequence is DGGRQRGEPDPRD. Residues 108–140 show a composition bias toward low complexity; that stretch reads SRSISTVSSGSRSSTRTSTSSSSSEQRLLGSSF. The tract at residues 118–315 is required for interaction with CAV1; sequence SRSSTRTSTS…VPPRNFEKPT (198 aa). Residues 177–291 enclose the SPR domain; that stretch reads RCEDCGKCKC…CYDRVNRPGC (115 aa). Positions 178 to 315 are required for interaction with TESK1; sequence CEDCGKCKCK…VPPRNFEKPT (138 aa).

Belongs to the sprouty family. As to quaternary structure, forms heterodimers with SPRY1. Forms a tripartite complex containing GAB1, METTL13 and SPRY2. Within the complex interacts with METTL13. Interacts with RAF1. Interacts (via C-terminus) with TESK1 (via C-terminus); the interaction disrupts SPRY2 interaction with GRB2, potentially via disruption of SPRY2 serine dephosphorylation. Interacts with PPP2R1A/PP2A-A and PPP2CA/PP2A-C; the interaction with PPP2CA/PP2A-C is inhibited by interaction with TESK1, possibly by vesicular sequestration of SPRY2. Inhibition of the interaction with the serine/threonine-protein phosphatase 2A (PP2A) holoenzyme results in loss of PP2A-mediated dephosphorylation, resulting in the loss of SPRY2 interaction with GRB2. Interacts with GRB2. Interacts with CBL/C-CBL; the interaction inhibits CBL-mediated ubiquitination of EGFR. Interacts (via C-terminus) with CAV1 (via C-terminus). Post-translationally, cleaved at Pro-144 by the prolyl endopeptidase FAP (seprase) activity (in vitro).

The protein localises to the cytoplasm. Its subcellular location is the cytoskeleton. The protein resides in the cell projection. It localises to the ruffle membrane. In terms of biological role, antagonist of fibroblast growth factor (FGF) pathways via inhibition of FGF-mediated phosphorylation of ERK1/2. Thereby acts as an antagonist of FGF-induced retinal lens fiber differentiation, may inhibit limb bud outgrowth and may negatively modulate respiratory organogenesis. Inhibits TGFB-induced epithelial-to-mesenchymal transition in retinal lens epithelial cells. Inhibits CBL/C-CBL-mediated EGFR ubiquitination. The chain is Protein sprouty homolog 2 (SPRY2) from Macaca fascicularis (Crab-eating macaque).